Consider the following 417-residue polypeptide: Adenylosuccinate synthetase (417 aa).

GTP is bound by residues 11 to 17 and 39 to 41; these read GDEGKGK and GHT. Asp-12 serves as the catalytic Proton acceptor. Mg(2+) contacts are provided by Asp-12 and Gly-39. Residues 12–15, 37–40, Thr-126, Arg-140, Gln-218, Thr-233, and Arg-295 contribute to the IMP site; these read DEGK and NAGH. His-40 (proton donor) is an active-site residue. Substrate is bound at residue 291-297; it reads TVSGRIR. GTP-binding positions include Arg-297, 323-325, and 406-408; these read KLD and SNG.

This sequence belongs to the adenylosuccinate synthetase family. In terms of assembly, homodimer. It depends on Mg(2+) as a cofactor.

It localises to the cytoplasm. It carries out the reaction IMP + L-aspartate + GTP = N(6)-(1,2-dicarboxyethyl)-AMP + GDP + phosphate + 2 H(+). Its pathway is purine metabolism; AMP biosynthesis via de novo pathway; AMP from IMP: step 1/2. Plays an important role in the de novo pathway of purine nucleotide biosynthesis. Catalyzes the first committed step in the biosynthesis of AMP from IMP. The protein is Adenylosuccinate synthetase of Neorickettsia sennetsu (strain ATCC VR-367 / Miyayama) (Ehrlichia sennetsu).